The chain runs to 136 residues: Large-conductance mechanosensitive channel (136 aa).

The next 2 membrane-spanning stretches (helical) occupy residues 9-29 (AFAV…GAAF) and 78-98 (FIQT…GVKA).

It belongs to the MscL family. As to quaternary structure, homopentamer.

Its subcellular location is the cell inner membrane. In terms of biological role, channel that opens in response to stretch forces in the membrane lipid bilayer. May participate in the regulation of osmotic pressure changes within the cell. The chain is Large-conductance mechanosensitive channel from Azotobacter vinelandii (strain DJ / ATCC BAA-1303).